A 508-amino-acid chain; its full sequence is 3-octaprenyl-4-hydroxybenzoate carboxy-lyase (508 aa).

Asn-178 is a Mn(2+) binding site. Residues 181-183, 195-197, and 200-201 contribute to the prenylated FMN site; these read IYR, RWL, and RG. Glu-244 is a binding site for Mn(2+). Residue Asp-303 is the Proton donor of the active site.

This sequence belongs to the UbiD family. Homohexamer. Requires prenylated FMN as cofactor. Mn(2+) is required as a cofactor.

Its subcellular location is the cell membrane. The catalysed reaction is a 4-hydroxy-3-(all-trans-polyprenyl)benzoate + H(+) = a 2-(all-trans-polyprenyl)phenol + CO2. The protein operates within cofactor biosynthesis; ubiquinone biosynthesis. Its function is as follows. Catalyzes the decarboxylation of 3-octaprenyl-4-hydroxy benzoate to 2-octaprenylphenol, an intermediate step in ubiquinone biosynthesis. This Cupriavidus taiwanensis (strain DSM 17343 / BCRC 17206 / CCUG 44338 / CIP 107171 / LMG 19424 / R1) (Ralstonia taiwanensis (strain LMG 19424)) protein is 3-octaprenyl-4-hydroxybenzoate carboxy-lyase.